The primary structure comprises 376 residues: MTDSDSPAIVIDNGSGMCKAGIAGDDAPRAAFPSIIGRPKMPGIMVGMDQKECYVGEEAQAKRGVLNLKYPIEHGIVTDYDDMEKIWHHCFYNELRVTPEEHPCLLTEAPQNPKLNREKMTKTMFETFNVPSFYVAIQAVLSLYASGRTTGIVVDSGDGVTHTVSIYEGYALPHAILRIDLAGRDLTEYCMKLLYEIGLNFSSTAEREIIRDIKEKLCYVALDYESELKAYKESSTNDKSYELPDGNTITVQDQRFRCPELLFKPAFIGKEFPGIHELTFNSIMKCDVDVRKDLYNNIVLSGGTTMFPGIAERLSKEVSALAPSSMKIKVVAPPERRYSVWIGGSILSSLSTFQTMWITKAEYDESGPSIVHRKCF.

It belongs to the actin family.

It is found in the cytoplasm. The protein localises to the cytoskeleton. The catalysed reaction is ATP + H2O = ADP + phosphate + H(+). Functionally, actins are highly conserved proteins that are involved in various types of cell motility and are ubiquitously expressed in all eukaryotic cells. This is Actin, cytoplasmic from Tetrahymena pyriformis.